The following is a 510-amino-acid chain: Nectin-4 (510 aa).

A signal peptide spans 1 to 31 (MPLSLGAEMWGPAAWLLLLLLLASFTGQRLA). The 113-residue stretch at 32 to 144 (GELETSDLVT…GSFQARLRLR (113 aa)) folds into the Ig-like V-type domain. Over 32-349 (GELETSDLVT…GKQVDLVSAS (318 aa)) the chain is Extracellular. 3 disulfide bridges follow: Cys-52-Cys-127, Cys-171-Cys-223, and Cys-270-Cys-315. Ig-like C2-type domains follow at residues 148-237 (PPLP…QRIT) and 248-331 (ASVR…VVVD). Asn-281 is a glycosylation site (N-linked (GlcNAc...) asparagine). Residues 350–370 (VVVVGVIAALLFCLLVVVVVL) form a helical membrane-spanning segment. At 371–510 (MSRYHRRKAQ…IYINGRGHLV (140 aa)) the chain is on the cytoplasmic side. Basic and acidic residues predominate over residues 400–412 (RLHSHHSDPRNQP). A disordered region spans residues 400 to 475 (RLHSHHSDPR…GRAEEEEDRD (76 aa)).

Belongs to the nectin family. In terms of assembly, self-associates. Interacts via its Ig-like V-type domain with NECTIN1 Ig-like V-type domain. Interacts via its C-terminus with AFDN. Interacts with TIGIT.

It is found in the cell membrane. It localises to the cell junction. Its subcellular location is the adherens junction. Functionally, seems to be involved in cell adhesion through trans-homophilic and -heterophilic interactions, the latter including specifically interactions with NECTIN1. Plays a role in the senescence-associated cell size enlargement via SFK/PI3K/Rac1 and thus promotes senescent cell survival. Also participates in the innate immune response by acting as a ligand for the receptor TIGIT to inhibit NK-cell activity. The polypeptide is Nectin-4 (Bos taurus (Bovine)).